We begin with the raw amino-acid sequence, 609 residues long: Arginine--tRNA ligase (609 aa).

Positions 132 to 142 (ANPTSSLHVGH) match the 'HIGH' region motif.

It belongs to the class-I aminoacyl-tRNA synthetase family. As to quaternary structure, monomer.

The protein resides in the cytoplasm. It catalyses the reaction tRNA(Arg) + L-arginine + ATP = L-arginyl-tRNA(Arg) + AMP + diphosphate. This chain is Arginine--tRNA ligase, found in Psychrobacter sp. (strain PRwf-1).